The following is a 317-amino-acid chain: Pantothenate kinase (317 aa).

99-106 (GSVSVGKS) provides a ligand contact to ATP.

Belongs to the prokaryotic pantothenate kinase family.

The protein localises to the cytoplasm. It catalyses the reaction (R)-pantothenate + ATP = (R)-4'-phosphopantothenate + ADP + H(+). It participates in cofactor biosynthesis; coenzyme A biosynthesis; CoA from (R)-pantothenate: step 1/5. This is Pantothenate kinase from Mannheimia succiniciproducens (strain KCTC 0769BP / MBEL55E).